Reading from the N-terminus, the 118-residue chain is Small ribosomal subunit protein uS13 (118 aa).

Residues 92 to 118 are disordered; sequence RRGLPVRGQRTKTNARTRKGPRKPIKK.

It belongs to the universal ribosomal protein uS13 family. As to quaternary structure, part of the 30S ribosomal subunit. Forms a loose heterodimer with protein S19. Forms two bridges to the 50S subunit in the 70S ribosome.

Functionally, located at the top of the head of the 30S subunit, it contacts several helices of the 16S rRNA. In the 70S ribosome it contacts the 23S rRNA (bridge B1a) and protein L5 of the 50S subunit (bridge B1b), connecting the 2 subunits; these bridges are implicated in subunit movement. Contacts the tRNAs in the A and P-sites. The sequence is that of Small ribosomal subunit protein uS13 from Yersinia pestis.